The chain runs to 111 residues: High mobility group protein Z (111 aa).

The HMG box DNA-binding region spans 6–72 (PKRPLSAYML…EYNKAVKEYE (67 aa)). At Ser11 the chain carries Phosphoserine. The interval 72 to 111 (EANGGTDSGAPKKRKKAAAKPAKKAKKKESSEEEEEDESE) is disordered. Positions 82-98 (PKKRKKAAAKPAKKAKK) are enriched in basic residues. Residues 102–111 (SEEEEEDESE) are compositionally biased toward acidic residues.

It belongs to the HMGB family.

The protein resides in the nucleus. It is found in the chromosome. The protein is High mobility group protein Z (HmgZ) of Drosophila melanogaster (Fruit fly).